The following is a 387-amino-acid chain: Xylose isomerase (387 aa).

Residues His-53 and Asp-56 contribute to the active site. Mg(2+) is bound by residues Glu-180, Glu-216, His-219, Asp-244, Asp-254, Asp-256, and Asp-286.

It belongs to the xylose isomerase family. Homotetramer. Requires Mg(2+) as cofactor.

It localises to the cytoplasm. It catalyses the reaction alpha-D-xylose = alpha-D-xylulofuranose. This Thermus thermophilus (strain ATCC 27634 / DSM 579 / HB8) protein is Xylose isomerase (xylA).